A 218-amino-acid polypeptide reads, in one-letter code: Recombination protein RecR (218 aa).

Residues cysteine 56–cysteine 71 form a C4-type zinc finger. The 117-residue stretch at glycine 79–proline 195 folds into the Toprim domain.

The protein belongs to the RecR family.

Its function is as follows. May play a role in DNA repair. It seems to be involved in an RecBC-independent recombinational process of DNA repair. It may act with RecF and RecO. This chain is Recombination protein RecR, found in Corynebacterium glutamicum (strain R).